The following is a 353-amino-acid chain: MVDTHKLADDVLQLLDNRIEDNYRVCVILVGSPGSGKSTIAEELCQIINEKYHTFLSEHPNVIEVNDRLKPMVNLVDSLKTLQPNKVAEMIENQGLFKDHVEDVNFQPVKYSALTSNNEECTAVVARGGTANAIRIAAVDNPVNVNKLAQDSINIAQIVPMDGFHLSRRCLDLFKDPQTAHKRRGSPSTFDSNNFLQLCKILAKTSLCKVSSHHKFYSTSSVFEKLSKTFSQTIPDIFVPGFNHALKDPTPDQYCISKFTRIVILEGLYLLYDQENWKKIYKTLADTGALLVYKIDIDYEATEERVAKRHLQSGLVTTIAEGREKFRSNDLLNGRDIDNHLIKVDNIVHIRND.

31–39 provides a ligand contact to ATP; that stretch reads GSPGSGKST.

This sequence belongs to the YFH7 family.

In terms of biological role, ATP-dependent kinase that could be involved in endoplasmic reticulum membrane assembly. The chain is ATP-dependent kinase YFH7 (YFH7) from Saccharomyces cerevisiae (strain ATCC 204508 / S288c) (Baker's yeast).